The following is a 312-amino-acid chain: Ribose-phosphate pyrophosphokinase (312 aa).

ATP contacts are provided by residues 34 to 36 and 93 to 94; these read DQE and RQ. Positions 127 and 167 each coordinate Mg(2+). Lysine 191 is a catalytic residue. D-ribose 5-phosphate-binding positions include arginine 193, aspartate 217, and 221–225; that span reads DSGGT.

This sequence belongs to the ribose-phosphate pyrophosphokinase family. Class I subfamily. Homohexamer. Requires Mg(2+) as cofactor.

It localises to the cytoplasm. The catalysed reaction is D-ribose 5-phosphate + ATP = 5-phospho-alpha-D-ribose 1-diphosphate + AMP + H(+). It participates in metabolic intermediate biosynthesis; 5-phospho-alpha-D-ribose 1-diphosphate biosynthesis; 5-phospho-alpha-D-ribose 1-diphosphate from D-ribose 5-phosphate (route I): step 1/1. Functionally, involved in the biosynthesis of the central metabolite phospho-alpha-D-ribosyl-1-pyrophosphate (PRPP) via the transfer of pyrophosphoryl group from ATP to 1-hydroxyl of ribose-5-phosphate (Rib-5-P). The chain is Ribose-phosphate pyrophosphokinase from Hyphomonas neptunium (strain ATCC 15444).